The chain runs to 159 residues: Phosphopantetheine adenylyltransferase (159 aa).

Thr10 contacts substrate. ATP contacts are provided by residues 10–11 (TF) and His18. The substrate site is built by Lys42, Leu73, and Arg87. Residues 88-90 (GLR), Glu98, and 123-129 (YSYVSGT) each bind ATP.

The protein belongs to the bacterial CoaD family. In terms of assembly, homohexamer. Mg(2+) serves as cofactor.

It is found in the cytoplasm. The catalysed reaction is (R)-4'-phosphopantetheine + ATP + H(+) = 3'-dephospho-CoA + diphosphate. Its pathway is cofactor biosynthesis; coenzyme A biosynthesis; CoA from (R)-pantothenate: step 4/5. In terms of biological role, reversibly transfers an adenylyl group from ATP to 4'-phosphopantetheine, yielding dephospho-CoA (dPCoA) and pyrophosphate. In Coxiella burnetii (strain CbuK_Q154) (Coxiella burnetii (strain Q154)), this protein is Phosphopantetheine adenylyltransferase.